Here is a 494-residue protein sequence, read N- to C-terminus: Flap endonuclease 1 (494 aa).

The tract at residues 1 to 106 is N-domain; it reads MGIKGLIPFL…KTLEKRRQQR (106 aa). Asp34 provides a ligand contact to Mg(2+). DNA-binding residues include Arg47 and Arg72. Mg(2+) is bound by residues Asp88, Glu160, Glu162, Asp181, and Asp183. The interval 124–253 is I-domain; the sequence is SVKKLVGRTV…KTAYSLVKKY (130 aa). Glu160 contributes to the DNA binding site. Residues Gly231 and Asp233 each coordinate DNA. Asp233 contacts Mg(2+). The interaction with PCNA stretch occupies residues 330–338; sequence IQTSLLSFL. Disordered regions lie at residues 341 to 382 and 395 to 426; these read PQHN…ESST and LFCE…ENET. A compositionally biased stretch (basic and acidic residues) spans 408-426; sequence DRGRVDKNEDLFKKSENET.

This sequence belongs to the XPG/RAD2 endonuclease family. FEN1 subfamily. As to quaternary structure, interacts with PCNA. Three molecules of FEN1 bind to one PCNA trimer with each molecule binding to one PCNA monomer. PCNA stimulates the nuclease activity without altering cleavage specificity. The cofactor is Mg(2+). In terms of processing, phosphorylated. Phosphorylation upon DNA damage induces relocalization to the nuclear plasma.

It localises to the nucleus. It is found in the nucleolus. Its subcellular location is the nucleoplasm. The protein localises to the mitochondrion. Its function is as follows. Structure-specific nuclease with 5'-flap endonuclease and 5'-3' exonuclease activities involved in DNA replication and repair. During DNA replication, cleaves the 5'-overhanging flap structure that is generated by displacement synthesis when DNA polymerase encounters the 5'-end of a downstream Okazaki fragment. It enters the flap from the 5'-end and then tracks to cleave the flap base, leaving a nick for ligation. Also involved in the long patch base excision repair (LP-BER) pathway, by cleaving within the apurinic/apyrimidinic (AP) site-terminated flap. Acts as a genome stabilization factor that prevents flaps from equilibrating into structures that lead to duplications and deletions. Also possesses 5'-3' exonuclease activity on nicked or gapped double-stranded DNA, and exhibits RNase H activity. Also involved in replication and repair of rDNA and in repairing mitochondrial DNA. The chain is Flap endonuclease 1 from Theileria parva (East coast fever infection agent).